We begin with the raw amino-acid sequence, 486 residues long: Hexosaminidase D (486 aa).

Residue Glu-149 is the Proton donor of the active site.

The protein belongs to the glycosyl hydrolase 20 family. Homodimer; disulfide-linked. Expressed in synovial fibroblasts and synovial membranes.

The protein resides in the cytoplasm. It localises to the nucleus. Its subcellular location is the extracellular vesicle. It catalyses the reaction Hydrolysis of terminal non-reducing N-acetyl-D-hexosamine residues in N-acetyl-beta-D-hexosaminides.. With respect to regulation, inhibited by O-(2-acetamido-2-deoxy-D-glucopyranosylidene)amino N-phenylcarbamate (PUGNAc). Inhibited by galacto-NAG-thiazoline. Functionally, has hexosaminidase activity. Responsible for the cleavage of the monosaccharides N-acetylglucosamine (GlcNAc) and N-acetylgalactosamine (GalNAc) from cellular substrates. Has a preference for galactosaminide over glucosaminide substrates. The polypeptide is Hexosaminidase D (Homo sapiens (Human)).